The primary structure comprises 87 residues: MANSPQAKKRARQNEKRFAINKARRSRIRTFLRKVEEAIASGDKEAATAALRAAQPELMRGVTRGVYHKNTASRKISRLAARVKALG.

The interval 1 to 22 (MANSPQAKKRARQNEKRFAINK) is disordered.

The protein belongs to the bacterial ribosomal protein bS20 family.

Functionally, binds directly to 16S ribosomal RNA. The polypeptide is Small ribosomal subunit protein bS20 (Ruegeria sp. (strain TM1040) (Silicibacter sp.)).